The following is a 137-amino-acid chain: Regulator of cell cycle RGCC (137 aa).

Disordered regions lie at residues 1–20 (MKPP…APAL) and 57–80 (LERM…SESA). The segment covering 65–80 (SASVSDSSGFSDSESA) has biased composition (low complexity). 6 positions are modified to phosphoserine: Ser67, Ser69, Ser71, Ser75, Ser91, and Ser97. Thr111 carries the post-translational modification Phosphothreonine; by CDK1.

In terms of assembly, interacts with SMAD3. Interacts with CDK1 and PLK1. In terms of tissue distribution, detected in brain, heart and liver (at protein level). Highly expressed in liver, skeletal muscle, kidney and pancreas. Detected at lower levels in heart, brain and placenta. Detected in aorta endothelial cells. Overexpressed in colon, breast, prostate, bladder, lung, and ovarian cancer tissues.

It localises to the cytoplasm. It is found in the nucleus. Its subcellular location is the cytoskeleton. The protein resides in the microtubule organizing center. The protein localises to the centrosome. In terms of biological role, modulates the activity of cell cycle-specific kinases. Enhances CDK1 activity. May contribute to the regulation of the cell cycle. May inhibit growth of glioma cells by promoting arrest of mitotic progression at the G2/M transition. Fibrogenic factor contributing to the pathogenesis of renal fibrosis through fibroblast activation. The protein is Regulator of cell cycle RGCC (RGCC) of Homo sapiens (Human).